A 168-amino-acid chain; its full sequence is Peptide deformylase (168 aa).

Residues C92 and H134 each contribute to the Fe cation site. The active site involves E135. H138 contributes to the Fe cation binding site.

This sequence belongs to the polypeptide deformylase family. The cofactor is Fe(2+).

The enzyme catalyses N-terminal N-formyl-L-methionyl-[peptide] + H2O = N-terminal L-methionyl-[peptide] + formate. In terms of biological role, removes the formyl group from the N-terminal Met of newly synthesized proteins. Requires at least a dipeptide for an efficient rate of reaction. N-terminal L-methionine is a prerequisite for activity but the enzyme has broad specificity at other positions. This chain is Peptide deformylase, found in Pseudomonas aeruginosa (strain ATCC 15692 / DSM 22644 / CIP 104116 / JCM 14847 / LMG 12228 / 1C / PRS 101 / PAO1).